A 217-amino-acid chain; its full sequence is Somatotropin (217 aa).

The signal sequence occupies residues 1-26 (MATGSRTSLLLAFTLLCLPQLKEAGA). Position 44 (His44) interacts with Zn(2+). Cys79 and Cys191 are disulfide-bonded. Ser132 carries the post-translational modification Phosphoserine. Glu200 provides a ligand contact to Zn(2+). A disulfide bond links Cys208 and Cys215.

The protein belongs to the somatotropin/prolactin family.

The protein localises to the secreted. Functionally, plays an important role in growth control. Its major role in stimulating body growth is to stimulate the liver and other tissues to secrete IGF1. It stimulates both the differentiation and proliferation of myoblasts. It also stimulates amino acid uptake and protein synthesis in muscle and other tissues. The protein is Somatotropin (GH1) of Saimiri boliviensis boliviensis (Bolivian squirrel monkey).